A 748-amino-acid chain; its full sequence is Far upstream element-binding protein 2 (748 aa).

Positions 1–78 (MSDYNTGGPP…GIRKDAFADA (78 aa)) are disordered. Ser-2 is subject to N-acetylserine. Residues 8 to 17 (GPPPGPPPPA) show a composition bias toward pro residues. Gly residues-rich tracts occupy residues 18–28 (GGGGGAAGAGG) and 36–69 (GAGDRGGGGPGGGGPGGGGASGGPSQPPGGGGPG). Residue Arg-40 is modified to Omega-N-methylarginine. N6-acetyllysine is present on Lys-88. Residues 90-148 (GGDAATTVNNNTPDFGFGGQKRQLEDGDQPDSKKLASQGDSIGSQLGPIHPPPRTSMTE) form a disordered region. The residue at position 101 (Thr-101) is a Phosphothreonine. Residues 111–123 (RQLEDGDQPDSKK) show a composition bias toward basic and acidic residues. Lys-122 is covalently cross-linked (Glycyl lysine isopeptide (Lys-Gly) (interchain with G-Cter in SUMO1); alternate). Residue Lys-122 forms a Glycyl lysine isopeptide (Lys-Gly) (interchain with G-Cter in SUMO2); alternate linkage. 6 positions are modified to phosphoserine: Ser-126, Ser-130, Ser-182, Ser-185, Ser-194, and Ser-275. 3 KH domains span residues 145–209 (SMTE…KMML), 234–300 (GTVQ…CEMV), and 323–387 (GGGI…ARII). Residues 394–422 (LRSGPPGPPGAPGMPPGGRGRGRGQGNWG) form a disordered region. Over residues 398-408 (PPGPPGAPGMP) the composition is skewed to pro residues. Gly residues predominate over residues 409–422 (PGGRGRGRGQGNWG). Residues Arg-412, Arg-414, Arg-416, and Arg-443 each carry the omega-N-methylarginine modification. One can recognise a KH 4 domain in the interval 425-492 (GGEMTFSIPT…QQIDHAKQLI (68 aa)). At Ser-481 the chain carries Phosphoserine. Positions 498 to 570 (GPLCPVGPGP…HDPNKAAAAA (73 aa)) are disordered. Composition is skewed to pro residues over residues 502 to 521 (PVGPGPGGPGPAGPMGPFNP) and 529 to 543 (PGAPPHAGGPPPHQY). Residues 572 to 583 (DPNAAWAAYYSH) form repeat 1. Residues 572–685 (DPNAAWAAYY…SAAWAEYYRQ (114 aa)) form a 4 X 12 AA imperfect repeats region. Positions 588–614 (PPGPVPGPAPAPAAPPAQGEPPQPPPT) are enriched in pro residues. Disordered stretches follow at residues 588-650 (PPGP…KAWE), 659-678 (VATGGGPGAPPGSQPDYSAA), and 689-735 (YYGQ…PALV). Repeat copies occupy residues 618-629 (DYTKAWEEYYKK), 644-655 (DYTKAWEEYYKK), and 674-685 (DYSAAWAEYYRQ).

This sequence belongs to the KHSRP family. As to quaternary structure, part of a ternary complex containing FUBP2, PTBP1, PTBP2 and HNRPH1. Interacts with PARN. Interacts with PQBP1.

It localises to the nucleus. The protein localises to the cytoplasm. Functionally, binds to the dendritic targeting element and may play a role in mRNA trafficking. Part of a ternary complex that binds to the downstream control sequence (DCS) of the pre-mRNA. Mediates exon inclusion in transcripts that are subject to tissue-specific alternative splicing. May interact with single-stranded DNA from the far-upstream element (FUSE). May activate gene expression. Also involved in degradation of inherently unstable mRNAs that contain AU-rich elements (AREs) in their 3'-UTR, possibly by recruiting degradation machinery to ARE-containing mRNAs. The polypeptide is Far upstream element-binding protein 2 (Khsrp) (Mus musculus (Mouse)).